The following is a 1167-amino-acid chain: mRNA 3'-end-processing protein rna-14 (1167 aa).

The segment at 1–245 (MSDDYDPTNI…DPTPVTQPAP (245 aa)) is disordered. 2 stretches are compositionally biased toward acidic residues: residues 16 to 26 (EEQEDYGEADG) and 70 to 79 (NTDDVGDDYD). Residues 102–111 (TAPQPAAPVA) show a composition bias toward low complexity. The span at 124–137 (DSDDEDEDGDDDGE) shows a compositional bias: acidic residues. 2 stretches are compositionally biased toward low complexity: residues 138–150 (PQQQ…QQQP) and 159–191 (GSGA…PQTA). Over residues 192–218 (TLTVQDNAGATTFNAPPVPQQVSHQSG) the composition is skewed to polar residues. Over residues 219 to 245 (ATTAAVPTTPSSAAPAVDPTPVTQPAP) the composition is skewed to low complexity. HAT repeat units follow at residues 277-309 (NDID…LELS), 311-342 (NNFP…YIRR), 352-387 (QARQ…FIKF), 401-434 (QKMD…FEMG), 471-504 (TNLP…WEKS), and 518-550 (LYQK…WCFD). The segment covering 882 to 893 (QQQPQLPMSQRD) has biased composition (polar residues). 2 disordered regions span residues 882-980 (QQQP…SGAG) and 1075-1167 (AYRE…PPPY). Residues 908–922 (SPSAGPGAPFAPYAA) are compositionally biased toward low complexity. Basic and acidic residues predominate over residues 924–946 (RPLDDRDYDDHPRKIARSEHDPF). Over residues 969 to 979 (GAAGAYSGSGA) the composition is skewed to gly residues. Low complexity predominate over residues 1079 to 1090 (SPGPLGGRPLSP). Positions 1121–1134 (EPPPAAQYGVPPPA) are enriched in pro residues. The span at 1135–1151 (QYDGGWAQQQQQQQYGQ) shows a compositional bias: low complexity.

Its subcellular location is the nucleus. It is found in the cytoplasm. In terms of biological role, component of the cleavage factor IA (CFIA) complex, which is involved in the endonucleolytic cleavage during polyadenylation-dependent pre-mRNA 3'-end formation. The polypeptide is mRNA 3'-end-processing protein rna-14 (rna-14) (Neurospora crassa (strain ATCC 24698 / 74-OR23-1A / CBS 708.71 / DSM 1257 / FGSC 987)).